Consider the following 221-residue polypeptide: Epididymal secretory glutathione peroxidase (221 aa).

Residues 1–21 (MVTELRVFYLVPLLLASYVQT) form the signal peptide. Cys-73 is a catalytic residue.

It belongs to the glutathione peroxidase family. In terms of tissue distribution, epididymis.

It is found in the secreted. It catalyses the reaction 2 glutathione + H2O2 = glutathione disulfide + 2 H2O. Functionally, protects cells and enzymes from oxidative damage, by catalyzing the reduction of hydrogen peroxide, lipid peroxides and organic hydroperoxide, by glutathione. May constitute a glutathione peroxidase-like protective system against peroxide damage in sperm membrane lipids. This Mus musculus (Mouse) protein is Epididymal secretory glutathione peroxidase (Gpx5).